The following is a 494-amino-acid chain: Ribonuclease H (494 aa).

2 disordered regions span residues 79-148 and 205-231; these read NRRR…APPP and RSGL…VGLR. Composition is skewed to polar residues over residues 84–100 and 131–143; these read GSTS…NQLA and PTTS…TRTS. The RNase H type-1 domain maps to 272-488; sequence SSVPQVVYVD…ADVLAVAGAR (217 aa). Positions 281, 325, 374, and 480 each coordinate Mg(2+).

Belongs to the RNase H family. In terms of assembly, monomer. Requires Mg(2+) as cofactor.

The enzyme catalyses Endonucleolytic cleavage to 5'-phosphomonoester.. Functionally, endonuclease that specifically degrades the RNA of RNA-DNA hybrids. The sequence is that of Ribonuclease H (RNH1) from Crithidia fasciculata.